Consider the following 428-residue polypeptide: Elongation factor 1-alpha (428 aa).

The tr-type G domain occupies 5 to 217; that stretch reads KPHVNIVFIG…DQIPEPEKPV (213 aa). Positions 14–21 are G1; sequence GHVDHGKS. Position 14-21 (14-21) interacts with GTP; that stretch reads GHVDHGKS. Position 21 (S21) interacts with Mg(2+). Positions 68–72 are G2; it reads GITID. The interval 89–92 is G3; the sequence is DAPG. Residues 89–93 and 144–147 contribute to the GTP site; these read DAPGH and NKMD. Residues 144–147 form a G4 region; the sequence is NKMD. Positions 181-183 are G5; the sequence is SAW.

This sequence belongs to the TRAFAC class translation factor GTPase superfamily. Classic translation factor GTPase family. EF-Tu/EF-1A subfamily.

It is found in the cytoplasm. The enzyme catalyses GTP + H2O = GDP + phosphate + H(+). Functionally, GTP hydrolase that promotes the GTP-dependent binding of aminoacyl-tRNA to the A-site of ribosomes during protein biosynthesis. The sequence is that of Elongation factor 1-alpha from Pyrococcus furiosus (strain ATCC 43587 / DSM 3638 / JCM 8422 / Vc1).